Here is a 124-residue protein sequence, read N- to C-terminus: Quinol oxidase subunit 4 (124 aa).

The next 3 helical transmembrane spans lie at 16–36 (IVGF…AVYT), 44–64 (LWII…MFMH), and 78–98 (TLFG…IFAA).

It belongs to the cytochrome c oxidase bacterial subunit 4 family.

Its subcellular location is the cell membrane. It carries out the reaction 2 a quinol + O2 = 2 a quinone + 2 H2O. In terms of biological role, catalyzes quinol oxidation with the concomitant reduction of oxygen to water. Major component for energy conversion during vegetative growth. The protein is Quinol oxidase subunit 4 (qoxD) of Bacillus spizizenii (strain ATCC 23059 / NRRL B-14472 / W23) (Bacillus subtilis subsp. spizizenii).